We begin with the raw amino-acid sequence, 739 residues long: POU domain, class 2, transcription factor 1 (739 aa).

The segment covering 1–11 (MNNPSETSKPS) has biased composition (polar residues). Disordered regions lie at residues 1-39 (MNNP…GGPI), 67-95 (SLNV…SVQA), 253-277 (TPIQ…EEPS), 353-378 (DSTL…RRKK), and 489-553 (SVTG…SSPL). Residues 81-95 (SQQPSQPSQQPSVQA) are compositionally biased toward low complexity. A POU-specific domain is found at 274-348 (EEPSDLEELE…LLEKWLNDAE (75 aa)). Positions 353–364 (DSTLSSPSALNS) are enriched in low complexity. Residues 375-434 (RRKKRTSIETNIRVALEKSFLENQKPTSEEITMIADQLNMEKEVIRVWFCNRRQKEKRIN) constitute a DNA-binding region (homeobox). Over residues 489-552 (SVTGTTETTS…QTTSTPLSSP (64 aa)) the composition is skewed to low complexity.

The protein belongs to the POU transcription factor family. Class-2 subfamily. In terms of assembly, interacts with NR3C1, AR and PGR.

It localises to the nucleus. Functionally, transcription factor that binds to the octamer motif (5'-ATTTGCAT-3') and activates the promoters of the genes for some small nuclear RNAs (snRNA) and of genes such as those for histone H2B and immunoglobulins. Modulates transcription transactivation by NR3C1, AR and PGR. This is POU domain, class 2, transcription factor 1 (POU2F1) from Gallus gallus (Chicken).